A 314-amino-acid chain; its full sequence is Large ribosomal subunit protein uL10 (314 aa).

A disordered region spans residues 285–314; sequence GAAAGGAAAEEEKEEEEESDEEGGFGDLFG. The span at 293-308 shows a compositional bias: acidic residues; the sequence is AEEEKEEEEESDEEGG. At serine 303 the chain carries Phosphoserine; by CK1.

The protein belongs to the universal ribosomal protein uL10 family. In terms of assembly, component of the large ribosomal subunit. P0 forms a pentameric complex by interaction with dimers of P1 and P2. In terms of processing, phosphorylated.

Functionally, ribosomal protein P0 is the functional equivalent of E.coli protein L10. The polypeptide is Large ribosomal subunit protein uL10 (Podospora anserina (Pleurage anserina)).